The primary structure comprises 305 residues: MSHFDRVRDYLTALQDRICNVVETIDGQSHFHQDHWQRTEGGGGRTRLLRDGAVFEQAAIGFSDVCGTHLPPSASVRRPELAGANWRACGVSLVFHPKNPFVPTTHLNVRYFRAEREGKQVAAWFGGGFDLTPFYPFDEDVVHWHTVARDLCAPFGDERYAAHKRWCDEYFVLRHRNETRGVGGLFFDDLDKDFERDFDYQRAVGDGFLDAYFPIVTRRHDTPYGDRERAFQLYRRGRYVEFNLLFDRGTLFGLQSGGRAESILISLPPLVRWEYGYHPLPGSAEARLADYLLPRDWLEESRICE.

Residue Ser-92 coordinates substrate. A divalent metal cation-binding residues include His-96 and His-106. Catalysis depends on His-106, which acts as the Proton donor. 108–110 (NVR) contacts substrate. A divalent metal cation contacts are provided by His-145 and His-175. An important for dimerization region spans residues 239–274 (YVEFNLLFDRGTLFGLQSGGRAESILISLPPLVRWE). 257–259 (GGR) is a binding site for substrate.

This sequence belongs to the aerobic coproporphyrinogen-III oxidase family. As to quaternary structure, homodimer. The cofactor is a divalent metal cation.

It is found in the cytoplasm. The catalysed reaction is coproporphyrinogen III + O2 + 2 H(+) = protoporphyrinogen IX + 2 CO2 + 2 H2O. It participates in porphyrin-containing compound metabolism; protoporphyrin-IX biosynthesis; protoporphyrinogen-IX from coproporphyrinogen-III (O2 route): step 1/1. Involved in the heme biosynthesis. Catalyzes the aerobic oxidative decarboxylation of propionate groups of rings A and B of coproporphyrinogen-III to yield the vinyl groups in protoporphyrinogen-IX. This is Oxygen-dependent coproporphyrinogen-III oxidase from Xylella fastidiosa (strain Temecula1 / ATCC 700964).